Here is a 1048-residue protein sequence, read N- to C-terminus: 3-hydroxy-3-methylglutaryl-coenzyme A reductase (1048 aa).

Residues 1 to 32 are Cytoplasmic-facing; sequence MDPVVRKPDPGGVQHRVTKALRAIVGHACRHP. A helical membrane pass occupies residues 33-53; the sequence is IHTLLVTALTAATTHLHVLEG. Topologically, residues 54–220 are lumenal; sequence TYQATHRGLA…FLHRVHHAET (167 aa). Residues 221-241 traverse the membrane as a helical segment; it reads VDLVIIGLSYLAMNMTVVSLF. The SSD domain occupies 222–403; it reads DLVIIGLSYL…FTFYATILCV (182 aa). The Cytoplasmic segment spans residues 242–250; it reads RVMRHLGSR. A helical transmembrane segment spans residues 251-271; it reads FWLAASVLLSGAFAFVLGLGI. Residues 272–276 lie on the Lumenal side of the membrane; that stretch reads TTTCD. A helical transmembrane segment spans residues 277 to 297; it reads VPVDMLLLFEGIPYLVLTVGF. Topologically, residues 298–348 are cytoplasmic; sequence EKPIQLTRAVLCVSEELWGGGQRQVPNGASSDDSRQNQLIPNIIQLAVDRE. Residues 349–369 form a helical membrane-spanning segment; the sequence is GWYIVRSYLLEIGALALGAVL. Topologically, residues 370-377 are lumenal; the sequence is RPKDSLGH. A helical membrane pass occupies residues 378–398; sequence FCFLAAWTLLIDAVLLFTFYA. The Cytoplasmic portion of the chain corresponds to 399-439; the sequence is TILCVKLEITRIRSPGGLGQVNAKHPSGIFGHKVKSTNITW. A helical transmembrane segment spans residues 440-460; it reads WKLLTVGGFVLCHFLQLSPFF. Topologically, residues 461–542 are lumenal; the sequence is YRVMGEYMAN…LDGLESPLGR (82 aa). Residues Asn-470 and Asn-520 are each glycosylated (N-linked (GlcNAc...) asparagine). The helical transmembrane segment at 543–563 threads the bilayer; it reads LCLMGALVVSLVLNNHLIHAA. Residues 564 to 1048 lie on the Cytoplasmic side of the membrane; it reads RWHAWPQARE…NRSAGATVKK (485 aa). Catalysis depends on Glu-729, which acts as the Charge relay system. 735-741 provides a ligand contact to CoA; the sequence is SASRGCK. NADP(+) contacts are provided by residues 796-798 and 823-831; these read SRF and DAMGMNMIS. The Charge relay system role is filled by Lys-863. 892-894 serves as a coordination point for CoA; the sequence is VLK. Catalysis depends on Asp-939, which acts as the Charge relay system. CoA is bound at residue 1034–1035; sequence AH. His-1035 serves as the catalytic Proton donor. 1039 to 1040 provides a ligand contact to NADP(+); it reads NR.

Belongs to the HMG-CoA reductase family.

It localises to the endoplasmic reticulum membrane. The catalysed reaction is (R)-mevalonate + 2 NADP(+) + CoA = (3S)-3-hydroxy-3-methylglutaryl-CoA + 2 NADPH + 2 H(+). It participates in metabolic intermediate biosynthesis; (R)-mevalonate biosynthesis; (R)-mevalonate from acetyl-CoA: step 3/3. Its function is as follows. HMG-CoA reductase; part of the first module of ergosterol biosynthesis pathway that includes the early steps of the pathway, conserved across all eukaryotes, and which results in the formation of mevalonate from acetyl-coenzyme A (acetyl-CoA). In this module, the cytosolic acetyl-CoA acetyltransferase catalyzes the formation of acetoacetyl-CoA. The hydroxymethylglutaryl-CoA synthase then condenses acetyl-CoA with acetoacetyl-CoA to form HMG-CoA. The rate-limiting step of the early module is the reduction to mevalonate by the 3-hydroxy-3-methylglutaryl-coenzyme A (HMG-CoA) reductase. In Aspergillus terreus, this protein is 3-hydroxy-3-methylglutaryl-coenzyme A reductase.